We begin with the raw amino-acid sequence, 114 residues long: MNKDDLDLDLEIIDESPSSEGEEERKERLFNESLKIIKSAMENVIQEIVIKLEDGSTHIVYVTKLDWVDGKVVMDFAVLDQERKAELAPHVEKCITMQLQDAFNKRSKKKFKFF.

The segment covering 1–14 has biased composition (acidic residues); sequence MNKDDLDLDLEIID. The disordered stretch occupies residues 1 to 26; sequence MNKDDLDLDLEIIDESPSSEGEEERK.

Helps head vertex assembly. In Escherichia coli (Bacteriophage T4), this protein is Head formation protein (40).